The chain runs to 82 residues: Probable glutamyl-tRNA(Gln) amidotransferase subunit C (82 aa).

It belongs to the GatC family. Heterotrimer of A, B and C subunits.

The enzyme catalyses L-glutamyl-tRNA(Gln) + L-glutamine + ATP + H2O = L-glutaminyl-tRNA(Gln) + L-glutamate + ADP + phosphate + H(+). The catalysed reaction is L-aspartyl-tRNA(Asn) + L-glutamine + ATP + H2O = L-asparaginyl-tRNA(Asn) + L-glutamate + ADP + phosphate + 2 H(+). In terms of biological role, allows the formation of correctly charged Asn-tRNA(Asn) or Gln-tRNA(Gln) through the transamidation of misacylated Asp-tRNA(Asn) or Glu-tRNA(Gln) in organisms which lack either or both of asparaginyl-tRNA or glutaminyl-tRNA synthetases. The reaction takes place in the presence of glutamine and ATP through an activated phospho-Asp-tRNA(Asn) or phospho-Glu-tRNA(Gln). The chain is Probable glutamyl-tRNA(Gln) amidotransferase subunit C from Methanocaldococcus jannaschii (strain ATCC 43067 / DSM 2661 / JAL-1 / JCM 10045 / NBRC 100440) (Methanococcus jannaschii).